Here is a 385-residue protein sequence, read N- to C-terminus: 8-amino-7-oxononanoate synthase (385 aa).

Arg23 is a binding site for substrate. Gly110–Phe111 contacts pyridoxal 5'-phosphate. Residue His135 coordinates substrate. Residues Ser180, His208, and Thr234 each contribute to the pyridoxal 5'-phosphate site. Lys237 carries the N6-(pyridoxal phosphate)lysine modification. Thr350 serves as a coordination point for substrate.

The protein belongs to the class-II pyridoxal-phosphate-dependent aminotransferase family. BioF subfamily. In terms of assembly, homodimer. Pyridoxal 5'-phosphate serves as cofactor.

The catalysed reaction is 6-carboxyhexanoyl-[ACP] + L-alanine + H(+) = (8S)-8-amino-7-oxononanoate + holo-[ACP] + CO2. It participates in cofactor biosynthesis; biotin biosynthesis. Functionally, catalyzes the decarboxylative condensation of pimeloyl-[acyl-carrier protein] and L-alanine to produce 8-amino-7-oxononanoate (AON), [acyl-carrier protein], and carbon dioxide. This chain is 8-amino-7-oxononanoate synthase, found in Vibrio vulnificus (strain YJ016).